Here is a 294-residue protein sequence, read N- to C-terminus: Cell division control protein 2 homolog A (294 aa).

In terms of domain architecture, Protein kinase spans 4–287 (YEKVEKIGEG…ARNALQHEYF (284 aa)). ATP contacts are provided by residues 10 to 18 (IGEGTYGVV) and lysine 33. The residue at position 14 (threonine 14) is a Phosphothreonine. Tyrosine 15 is subject to Phosphotyrosine. Catalysis depends on aspartate 127, which acts as the Proton acceptor. Residue threonine 161 is modified to Phosphothreonine; by CAK.

It belongs to the protein kinase superfamily. CMGC Ser/Thr protein kinase family. CDC2/CDKX subfamily.

The catalysed reaction is L-seryl-[protein] + ATP = O-phospho-L-seryl-[protein] + ADP + H(+). It carries out the reaction L-threonyl-[protein] + ATP = O-phospho-L-threonyl-[protein] + ADP + H(+). It catalyses the reaction [DNA-directed RNA polymerase] + ATP = phospho-[DNA-directed RNA polymerase] + ADP + H(+). Its activity is regulated as follows. Phosphorylation at Thr-14 or Tyr-15 inactivates the enzyme, while phosphorylation at Thr-161 activates it. Functionally, plays a key role in the control of the eukaryotic cell cycle. The sequence is that of Cell division control protein 2 homolog A (CDC2A) from Antirrhinum majus (Garden snapdragon).